A 1453-amino-acid polypeptide reads, in one-letter code: Leucine-rich repeat-containing protein 9 (1453 aa).

LRR repeat units lie at residues Phe53–Leu78, Cys97–Leu119, Ile120–Leu141, Lys142–Asn164, Gln166–Arg188, Leu224–Lys248, and Lys264–Leu287. The interval Leu302–Pro321 is disordered. 23 LRR repeats span residues Leu344–Ile367, Lys671–Tyr693, Ser694–Leu715, Thr716–Leu737, Asn739–Gly758, Leu759–Lys784, Thr786–Arg812, Tyr886–Leu908, Glu909–Cys930, Ile931–Met952, Thr953–Asn975, Met976–Leu1001, Leu1023–Ile1048, Phe1092–Gln1115, Phe1116–Leu1138, Pro1139–Gln1161, Met1201–Arg1224, Leu1225–Leu1247, Val1248–Lys1270, Ser1272–Ser1292, Leu1293–Val1317, Ser1319–Leu1345, and Glu1365–Gly1388.

The sequence is that of Leucine-rich repeat-containing protein 9 (LRRC9) from Homo sapiens (Human).